The sequence spans 358 residues: Feruloyl CoA ortho-hydroxylase F6H1-1 (358 aa).

One can recognise a Fe2OG dioxygenase domain in the interval 200–308 (TKESLLMGSK…RISVPIFVNP (109 aa)). Residue Tyr-216 coordinates 2-oxoglutarate. The Fe cation site is built by His-231, Asp-233, and His-289. Arg-299 and Ser-301 together coordinate 2-oxoglutarate.

Belongs to the iron/ascorbate-dependent oxidoreductase family. L-ascorbate serves as cofactor. The cofactor is Fe(2+).

The enzyme catalyses (E)-feruloyl-CoA + 2-oxoglutarate + O2 = (E)-6-hydroxyferuloyl-CoA + succinate + CO2. The protein operates within phenylpropanoid metabolism. Functionally, 2-oxoglutarate (OG)- and Fe(II)-dependent dioxygenase (2OGD) involved in scopoletin biosynthesis. Converts feruloyl CoA into 6'-hydroxyferuloyl CoA. This is Feruloyl CoA ortho-hydroxylase F6H1-1 from Ipomoea batatas (Sweet potato).